Reading from the N-terminus, the 178-residue chain is Endoribonuclease YbeY (178 aa).

Zn(2+) contacts are provided by His118, His122, and His128. The interval 156–178 is disordered; the sequence is YQQDRQDERDRRLLDKSRYFDEP. Residues 159-178 are compositionally biased toward basic and acidic residues; sequence DRQDERDRRLLDKSRYFDEP.

Belongs to the endoribonuclease YbeY family. Zn(2+) is required as a cofactor.

The protein resides in the cytoplasm. Functionally, single strand-specific metallo-endoribonuclease involved in late-stage 70S ribosome quality control and in maturation of the 3' terminus of the 16S rRNA. In Mycobacterium marinum (strain ATCC BAA-535 / M), this protein is Endoribonuclease YbeY.